The following is a 424-amino-acid chain: Serine hydroxymethyltransferase (424 aa).

(6S)-5,6,7,8-tetrahydrofolate contacts are provided by residues Leu118 and 122–124; that span reads GHL. Position 227 is an N6-(pyridoxal phosphate)lysine (Lys227). Residue 351–353 coordinates (6S)-5,6,7,8-tetrahydrofolate; it reads SPF.

The protein belongs to the SHMT family. Homodimer. Pyridoxal 5'-phosphate serves as cofactor.

The protein resides in the cytoplasm. It carries out the reaction (6R)-5,10-methylene-5,6,7,8-tetrahydrofolate + glycine + H2O = (6S)-5,6,7,8-tetrahydrofolate + L-serine. It functions in the pathway one-carbon metabolism; tetrahydrofolate interconversion. Its pathway is amino-acid biosynthesis; glycine biosynthesis; glycine from L-serine: step 1/1. Functionally, catalyzes the reversible interconversion of serine and glycine with tetrahydrofolate (THF) serving as the one-carbon carrier. This reaction serves as the major source of one-carbon groups required for the biosynthesis of purines, thymidylate, methionine, and other important biomolecules. Also exhibits THF-independent aldolase activity toward beta-hydroxyamino acids, producing glycine and aldehydes, via a retro-aldol mechanism. The chain is Serine hydroxymethyltransferase from Thermosipho melanesiensis (strain DSM 12029 / CIP 104789 / BI429).